Consider the following 110-residue polypeptide: CVVLVMCMVVIAPMAEGAISCGAVTSDLSPCLTYLTGGPGPSPQCCGGVKKLLAAANTTPDRQAACNCLKSAAGSITKLNTNNAAALPGKCGVNIPYKISTSTNCNTVKF.

Residues 1-17 (CVVLVMCMVVIAPMAEG) form the signal peptide. 4 cysteine pairs are disulfide-bonded: Cys-21/Cys-68, Cys-31/Cys-45, Cys-46/Cys-91, and Cys-66/Cys-105.

It belongs to the plant LTP family.

In terms of biological role, plant non-specific lipid-transfer proteins transfer phospholipids as well as galactolipids across membranes. May play a role in wax or cutin deposition in the cell walls of expanding epidermal cells and certain secretory tissues. The protein is Non-specific lipid-transfer protein 4 of Lens culinaris (Lentil).